The chain runs to 297 residues: IMPACT family member C14C8.09c (297 aa).

Positions 225–255 (LRSELQEKNQKDKKKEVNKLEEKMTNAKEPN) form a coiled coil. Composition is skewed to basic and acidic residues over residues 228 to 250 (ELQE…KMTN) and 280 to 297 (SVDH…EKEE). Positions 228-297 (ELQEKNQKDK…KIIKDVEKEE (70 aa)) are disordered.

It belongs to the IMPACT family.

The sequence is that of IMPACT family member C14C8.09c from Schizosaccharomyces pombe (strain 972 / ATCC 24843) (Fission yeast).